The following is a 345-amino-acid chain: Myb/SANT-like DNA-binding domain-containing protein 4 (345 aa).

Positions 4-77 constitute a Myb-like domain; that stretch reads LKRKRKSNFS…EVKRRYLDWR (74 aa). Residue Lys9 forms a Glycyl lysine isopeptide (Lys-Gly) (interchain with G-Cter in SUMO2) linkage. Phosphoserine is present on Ser106. Residues Lys114 and Lys142 each participate in a glycyl lysine isopeptide (Lys-Gly) (interchain with G-Cter in SUMO2) cross-link. The tract at residues 139–175 is disordered; it reads TEVKVEEEERDPQSPEFEIEEEEEMLSSVIPDSRREN. A Phosphothreonine modification is found at Thr188. The stretch at 202–344 forms a coiled coil; it reads HLLMNIEKQK…RLRIQKEGHL (143 aa). Glycyl lysine isopeptide (Lys-Gly) (interchain with G-Cter in SUMO2) cross-links involve residues Lys237, Lys254, and Lys273.

The protein is Myb/SANT-like DNA-binding domain-containing protein 4 (Msantd4) of Mus musculus (Mouse).